The sequence spans 275 residues: Putative carbamate hydrolase RutD (275 aa).

An AB hydrolase-1 domain is found at 15–116 (TVVLSSGLGG…SLVVINGWTV (102 aa)).

Belongs to the AB hydrolase superfamily. Hydrolase RutD family.

The catalysed reaction is carbamate + 2 H(+) = NH4(+) + CO2. In terms of biological role, involved in pyrimidine catabolism. May facilitate the hydrolysis of carbamate, a reaction that can also occur spontaneously. This Pantoea ananatis (strain LMG 20103) protein is Putative carbamate hydrolase RutD.